Consider the following 503-residue polypeptide: Lanosterol 14-alpha demethylase (503 aa).

The chain crosses the membrane as a helical span at residues 24 to 44 (GNLLSTLLIACAFTLSLVYLF). Cys449 contacts heme.

This sequence belongs to the cytochrome P450 family. It depends on heme as a cofactor. Ubiquitinated by MARCHF6, leading to proteasomal degradation.

It is found in the endoplasmic reticulum membrane. It localises to the microsome membrane. The catalysed reaction is a 14alpha-methyl steroid + 3 reduced [NADPH--hemoprotein reductase] + 3 O2 = a Delta(14) steroid + formate + 3 oxidized [NADPH--hemoprotein reductase] + 4 H2O + 4 H(+). The enzyme catalyses lanosterol + 3 reduced [NADPH--hemoprotein reductase] + 3 O2 = 4,4-dimethyl-5alpha-cholesta-8,14,24-trien-3beta-ol + formate + 3 oxidized [NADPH--hemoprotein reductase] + 4 H2O + 4 H(+). It carries out the reaction 24,25-dihydrolanosterol + 3 reduced [NADPH--hemoprotein reductase] + 3 O2 = 4,4-dimethyl-8,14-cholestadien-3beta-ol + formate + 3 oxidized [NADPH--hemoprotein reductase] + 4 H2O + 4 H(+). It catalyses the reaction a 14alpha-methyl steroid + reduced [NADPH--hemoprotein reductase] + O2 = a 14alpha-hydroxymethyl steroid + oxidized [NADPH--hemoprotein reductase] + H2O + H(+). The catalysed reaction is a 14alpha-hydroxymethyl steroid + reduced [NADPH--hemoprotein reductase] + O2 = a 14alpha-formyl steroid + oxidized [NADPH--hemoprotein reductase] + 2 H2O + H(+). The enzyme catalyses a 14alpha-formyl steroid + reduced [NADPH--hemoprotein reductase] + O2 = a Delta(14) steroid + formate + oxidized [NADPH--hemoprotein reductase] + H2O + 2 H(+). It carries out the reaction lanosterol + reduced [NADPH--hemoprotein reductase] + O2 = 32-hydroxylanosterol + oxidized [NADPH--hemoprotein reductase] + H2O + H(+). It catalyses the reaction 32-hydroxylanosterol + reduced [NADPH--hemoprotein reductase] + O2 = 32-oxolanosterol + oxidized [NADPH--hemoprotein reductase] + 2 H2O + H(+). The catalysed reaction is 32-oxolanosterol + reduced [NADPH--hemoprotein reductase] + O2 = 4,4-dimethyl-5alpha-cholesta-8,14,24-trien-3beta-ol + formate + oxidized [NADPH--hemoprotein reductase] + H2O + 2 H(+). The enzyme catalyses 24,25-dihydrolanosterol + reduced [NADPH--hemoprotein reductase] + O2 = 32-hydroxy-24,25-dihydrolanosterol + oxidized [NADPH--hemoprotein reductase] + H2O + H(+). It carries out the reaction 32-hydroxy-24,25-dihydrolanosterol + reduced [NADPH--hemoprotein reductase] + O2 = 32-oxo-24,25-dihydrolanosterol + oxidized [NADPH--hemoprotein reductase] + 2 H2O + H(+). It catalyses the reaction 32-oxo-24,25-dihydrolanosterol + reduced [NADPH--hemoprotein reductase] + O2 = 4,4-dimethyl-8,14-cholestadien-3beta-ol + formate + oxidized [NADPH--hemoprotein reductase] + H2O + 2 H(+). The protein operates within steroid biosynthesis; zymosterol biosynthesis; zymosterol from lanosterol: step 1/6. With respect to regulation, inhibited by azalanstat. Inhibited by azole antifungal agents ketoconazole, itraconazole and fluconazole. Its function is as follows. Sterol 14alpha-demethylase that plays a critical role in the cholesterol biosynthesis pathway, being cholesterol the major sterol component in mammalian membranes as well as a precursor for bile acid and steroid hormone synthesis. Cytochrome P450 monooxygenase that catalyzes the three-step oxidative removal of the 14alpha-methyl group (C-32) of sterols such as lanosterol (lanosta-8,24-dien-3beta-ol) and 24,25-dihydrolanosterol (DHL) in the form of formate, and converts the sterols to 4,4-dimethyl-5alpha-cholesta-8,14,24-trien-3beta-ol and 4,4-dimethyl-8,14-cholestadien-3beta-ol, respectively, which are intermediates of cholesterol biosynthesis. Can also demethylate substrates not intrinsic to mammals, such as eburicol (24-methylene-24,25-dihydrolanosterol), but at a lower rate than DHL. This is Lanosterol 14-alpha demethylase from Mus musculus (Mouse).